Reading from the N-terminus, the 89-residue chain is MAHKKGTGSTRNGRDSNAKRLGVKCFGGELVHPGYILVRQRGTKFHPGVNVRRGGDDTLFAVATGIVTFERYGKWRKKVSVYPVEAAAQ.

Belongs to the bacterial ribosomal protein bL27 family.

In Synechococcus sp. (strain JA-3-3Ab) (Cyanobacteria bacterium Yellowstone A-Prime), this protein is Large ribosomal subunit protein bL27.